A 284-amino-acid chain; its full sequence is Succinate dehydrogenase [ubiquinone] iron-sulfur subunit, mitochondrial (284 aa).

Residues 1–26 (MAAVVFSLRRSGPVFRLPGVLQVCRG) constitute a mitochondrion transit peptide. In terms of domain architecture, 2Fe-2S ferredoxin-type spans 44–137 (KKFAIYRWDP…VSKIYPLPHM (94 aa)). [2Fe-2S] cluster is bound by residues Cys97, Cys102, Cys105, and Cys117. The 4Fe-4S ferredoxin-type domain occupies 180 to 210 (DRDKLDGLYECILCACCSTSCPSYWWNADKY). Residues Cys190, Cys193, and Cys196 each contribute to the [4Fe-4S] cluster site. Residue Cys200 participates in [3Fe-4S] cluster binding. Position 205 (Trp205) interacts with a ubiquinone. The [3Fe-4S] cluster site is built by Cys247 and Cys253. Cys257 is a [4Fe-4S] cluster binding site.

The protein belongs to the succinate dehydrogenase/fumarate reductase iron-sulfur protein family. Component of complex II composed of four subunits: the flavoprotein (FP) sdha, iron-sulfur protein (IP) sdhb, and a cytochrome b composed of sdhc and sdhd. [2Fe-2S] cluster serves as cofactor. It depends on [3Fe-4S] cluster as a cofactor. The cofactor is [4Fe-4S] cluster.

The protein resides in the mitochondrion inner membrane. It carries out the reaction a quinone + succinate = fumarate + a quinol. The catalysed reaction is (R)-malate + a quinone = enol-oxaloacetate + a quinol. It catalyses the reaction (S)-malate + a quinone = enol-oxaloacetate + a quinol. It participates in carbohydrate metabolism; tricarboxylic acid cycle; fumarate from succinate (eukaryal route): step 1/1. Enol-oxaloacetate inhibits the succinate dehydrogenase activity. Iron-sulfur protein (IP) subunit of the succinate dehydrogenase complex (mitochondrial respiratory chain complex II), responsible for transferring electrons from succinate to ubiquinone (coenzyme Q). SDH also oxidizes malate to the non-canonical enol form of oxaloacetate, enol-oxaloacetate. Enol-oxaloacetate, which is a potent inhibitor of the succinate dehydrogenase activity, is further isomerized into keto-oxaloacetate. This chain is Succinate dehydrogenase [ubiquinone] iron-sulfur subunit, mitochondrial (sdhb), found in Xenopus tropicalis (Western clawed frog).